A 126-amino-acid polypeptide reads, in one-letter code: uncharacterized protein (126 aa).

This is an uncharacterized protein from Salmonella typhi.